Consider the following 93-residue polypeptide: Auxin-responsive protein SAUR26 (93 aa).

It belongs to the ARG7 family. Interacts with PP2C-D1. As to expression, higher expression in thermo-responsive cultivars (e.g. cv. Alst-1, cv. Ang-0 and cv. Com-0) than in low thermo-responsive cultivars (e.g. cv. Dja-1, cv. El-0 and cv. Kon).

The protein localises to the cell membrane. Provide a mechanistic link between auxin and plasma membrane H(+)-ATPases (PM H(+)-ATPases, e.g. AHA1 and AHA2), and triggers PM H(+)-ATPases activity by promoting phosphorylation of their C-terminal autoinhibitory domain as a result of PP2C-D subfamily of type 2C phosphatases inhibition, thus leading to the acidification of the apoplast and the facilitation of solutes and water uptake to drive cell expansion. Functions as a positive effectors of cell expansion through modulation of auxin transport. Involved in thermo-responsiveness of plant architecture. Enhances plasma membrane H(+)-ATPase. Probably involved in light intensity mediated root development. This is Auxin-responsive protein SAUR26 from Arabidopsis thaliana (Mouse-ear cress).